The chain runs to 209 residues: Pyridoxine/pyridoxamine 5'-phosphate oxidase (209 aa).

Substrate-binding positions include 7-10 (RADY) and K64. FMN-binding positions include 59-64 (RIVLLK), 74-75 (FT), and K81. The substrate site is built by Y121, R125, and S129. Residues 138 to 139 (QS), W182, and R192 each bind FMN.

This sequence belongs to the pyridoxamine 5'-phosphate oxidase family. In terms of assembly, homodimer. The cofactor is FMN.

It catalyses the reaction pyridoxamine 5'-phosphate + O2 + H2O = pyridoxal 5'-phosphate + H2O2 + NH4(+). The catalysed reaction is pyridoxine 5'-phosphate + O2 = pyridoxal 5'-phosphate + H2O2. It participates in cofactor metabolism; pyridoxal 5'-phosphate salvage; pyridoxal 5'-phosphate from pyridoxamine 5'-phosphate: step 1/1. Its pathway is cofactor metabolism; pyridoxal 5'-phosphate salvage; pyridoxal 5'-phosphate from pyridoxine 5'-phosphate: step 1/1. In terms of biological role, catalyzes the oxidation of either pyridoxine 5'-phosphate (PNP) or pyridoxamine 5'-phosphate (PMP) into pyridoxal 5'-phosphate (PLP). The polypeptide is Pyridoxine/pyridoxamine 5'-phosphate oxidase (Haemophilus ducreyi (strain 35000HP / ATCC 700724)).